The chain runs to 82 residues: U1-plectoxin-Pt1a (82 aa).

The first 20 residues, 1–20 (MKHLIFSSALVCALVVCTFA), serve as a signal peptide directing secretion. A propeptide spanning residues 21 to 33 (EEQVNVPFLPDER) is cleaved from the precursor. 5 disulfide bridges follow: Cys37-Cys51, Cys44-Cys57, Cys50-Cys68, Cys54-Cys77, and Cys59-Cys66. A lipid anchor (O-palmitoyl serine) is attached at Ser79. Positions 80 to 82 (RRR) are excised as a propeptide.

Belongs to the neurotoxin 02 (plectoxin) family. 02 (plectoxin) subfamily. In terms of processing, plectoxin-5 presumably undergoes post-translational modification to give rise to plectoxin-6. Expressed by the venom gland.

The protein localises to the secreted. In terms of biological role, potent toxin that may paralyze and/or kill insect pests such as H.virescens (lepidoptera), S.exigua (beet armyworm) and M.sexta (tobacco hornworm). The protein is U1-plectoxin-Pt1a of Plectreurys tristis (Spider).